A 665-amino-acid chain; its full sequence is non-specific serine/threonine protein kinase (665 aa).

Residues 145–597 form the Protein kinase domain; that stretch reads FDVHCRIGSG…AEEALKHPFF (453 aa). Residues 151–159 and Lys-181 contribute to the ATP site; that span reads IGSGTFSTV. Asp-268 functions as the Proton acceptor in the catalytic mechanism.

This sequence belongs to the protein kinase superfamily. Ser/Thr protein kinase family. Interacts with chif (via N-terminus).

The enzyme catalyses L-seryl-[protein] + ATP = O-phospho-L-seryl-[protein] + ADP + H(+). It catalyses the reaction L-threonyl-[protein] + ATP = O-phospho-L-threonyl-[protein] + ADP + H(+). Probable serine/threonine protein kinase that forms a complex with the N-terminal peptide of the chiffon protein and may be involved in regulating meiotic processes in the male testis. This is non-specific serine/threonine protein kinase from Drosophila melanogaster (Fruit fly).